The following is a 617-amino-acid chain: Formin-binding protein 1 (617 aa).

The segment at 1–79 (MSWGTELWDQ…CKAFISNLNE (79 aa)) is required for self-association and induction of membrane tubulation. An F-BAR domain is found at 1–264 (MSWGTELWDQ…AAESIDQKND (264 aa)). The interval 1 to 335 (MSWGTELWDQ…KKNKLMSLLT (335 aa)) is interaction with microtubules. An N6-acetyllysine mark is found at Lys66 and Lys110. Residues 67–259 (YTSCKAFISN…DGIVKAAESI (193 aa)) adopt a coiled-coil conformation. The interval 251-617 (GIVKAAESID…VCLDKNAKDS (367 aa)) is required for self-association and induction of membrane tubulation. 2 disordered regions span residues 280-315 (GDIE…KFGG) and 333-366 (LLTS…QKEP). Ser296 and Ser299 each carry phosphoserine. A compositionally biased stretch (pro residues) spans 338 to 347 (HQPPPPPPAS). Residues Ser349 and Ser359 each carry the phosphoserine modification. Residues 398–490 (TPEDFSNLPP…EVEGRLPARS (93 aa)) are a coiled coil. Positions 400–552 (EDFSNLPPEQ…FDDEEPLPAI (153 aa)) are interaction with RND2. One can recognise an REM-1 domain in the interval 404–481 (NLPPEQRRKK…TQKFEAWLAE (78 aa)). Positions 486–531 (LPARSEQARRQSGLYDSQNPPTVNNCAQDRESPDGSYTEEQSQESE) are disordered. The segment at 495-617 (RQSGLYDSQN…VCLDKNAKDS (123 aa)) is interaction with PDE6G. The residue at position 497 (Ser497) is a Phosphoserine. Polar residues predominate over residues 499-512 (LYDSQNPPTVNNCA). Tyr500 carries the post-translational modification Phosphotyrosine. A required for interaction with TNKS region spans residues 514–617 (DRESPDGSYT…VCLDKNAKDS (104 aa)). At Ser521 the chain carries Phosphoserine. The segment at 535–617 (LATDFDDEFD…VCLDKNAKDS (83 aa)) is interaction with DNM1 and DNM3. The region spanning 550–611 (PAIGTCKALY…PTSYVEVCLD (62 aa)) is the SH3 domain. The segment at 550 to 617 (PAIGTCKALY…VCLDKNAKDS (68 aa)) is interaction with ARHGAP17, DAAM1, DIAPH1 and DIAPH2. Residues 553–609 (GTCKALYTFEGQNEGTISVVEGETLYVIEEDKGDGWTRIRRNEDEEGYVPTSYVEVC) form an interaction with DNM2 and WASL region. Residues 553–610 (GTCKALYTFEGQNEGTISVVEGETLYVIEEDKGDGWTRIRRNEDEEGYVPTSYVEVCL) are interaction with FASLG.

Belongs to the FNBP1 family. Interacts specifically with GTP-bound RND2 and CDC42. Interacts with PDE6G and microtubules. Homodimerizes, the dimers can polymerize end-to-end to form filamentous structures. Interacts with AKAP9, ARHGAP17, DAAM1, DIAPH1, DIAPH2, DNM1, DNM2, DNM3, FASLG/FASL, SNX2 and WASL/N-WASP. May interact with TNKS. Very highly expressed in the epithelial cells of the gastrointestinal tract, respiratory, reproductive and urinary systems. Also highly expressed in brown adipose tissue, cardiomyocytes, enteric ganglia and glucagon producing cells of the pancreas. Expressed in germ cells of the testis and all regions of the brain.

Its subcellular location is the cytoplasm. The protein resides in the cytoskeleton. It is found in the cell cortex. It localises to the lysosome. The protein localises to the cytoplasmic vesicle. Its subcellular location is the cell membrane. The protein resides in the membrane. It is found in the clathrin-coated pit. May act as a link between RND2 signaling and regulation of the actin cytoskeleton. Required to coordinate membrane tubulation with reorganization of the actin cytoskeleton during the late stage of clathrin-mediated endocytosis. Binds to lipids such as phosphatidylinositol 4,5-bisphosphate and phosphatidylserine and promotes membrane invagination and the formation of tubules. Also enhances actin polymerization via the recruitment of WASL/N-WASP, which in turn activates the Arp2/3 complex. Actin polymerization may promote the fission of membrane tubules to form endocytic vesicles. May be required for the lysosomal retention of FASLG/FASL. In Homo sapiens (Human), this protein is Formin-binding protein 1 (FNBP1).